Reading from the N-terminus, the 167-residue chain is uncharacterized protein (167 aa).

The next 2 helical transmembrane spans lie at Tyr96–Tyr115 and Trp119–Val138.

Its subcellular location is the cell membrane. This is an uncharacterized protein from Bacillus subtilis (strain 168).